The chain runs to 508 residues: MGTRGLALALLAAVLLLQTVLPAASEAEGLVRIALKKRPIDRNSRVATGLSGGEEQPLLSGANPLRSEEEGDIVALKNYMNAQYFGEIGVGTPPQKFTVIFDTGSSNLWVPSAKCYFSIACYLHSRYKAGASSTYKKNGKPAAIQYGTGSIAGYFSEDSVTVGDLVVKDQEFIEATKEPGITFLVAKFDGILGLGFKEISVGKAVPVWYKMIEQGLVSDPVFSFWLNRHVDEGEGGEIIFGGMDPKHYVGEHTYVPVTQKGYWQFDMGDVLVGGKSTGFCAGGCAAIADSGTSLLAGPTAIITEINEKIGAAGVVSQECKTIVSQYGQQILDLLLAETQPKKICSQVGLCTFDGTRGVSAGIRSVVDDEPVKSNGLRADPMCSACEMAVVWMQNQLAQNKTQDLILDYVNQLCNRLPSPMGESAVDCGSLGSMPDIEFTIGGKKFALKPEEYILKVGEGAAAQCISGFTAMDIPPPRGPLWILGDVFMGPYHTVFDYGKLRIGFAKAA.

Residues 1-27 form the signal peptide; sequence MGTRGLALALLAAVLLLQTVLPAASEA. A propeptide spans 28–66 (activation peptide); the sequence is EGLVRIALKKRPIDRNSRVATGLSGGEEQPLLSGANPLR. In terms of domain architecture, Peptidase A1 spans 84–505; that stretch reads YFGEIGVGTP…DYGKLRIGFA (422 aa). Asp102 is an active-site residue. Intrachain disulfides connect Cys115-Cys121 and Cys280-Cys284. Residue Asp289 is part of the active site. Positions 314 to 419 constitute a Saposin B-type domain; it reads VVSQECKTIV…NQLCNRLPSP (106 aa). 4 disulfide bridges follow: Cys319/Cys413, Cys344/Cys385, Cys350/Cys382, and Cys427/Cys464. An N-linked (GlcNAc...) asparagine glycan is attached at Asn399.

It belongs to the peptidase A1 family. In terms of assembly, heterodimer of two subunits (29 kDa and 11 kDa) processed from the precursor molecule. A large enzyme (32 kDa and 16 kDa) is an intermediate precursor form. Embryo and leaf.

It localises to the vacuole. The catalysed reaction is Prefers hydrophobic residues Phe, Val, Ile, Leu, and Ala at P1 and P1', but also cleaves -Phe-|-Asp- and -Asp-|-Asp- bonds in 2S albumin from plant seeds.. In terms of biological role, involved in the breakdown of propeptides of storage proteins in protein-storage vacuoles. The protein is Phytepsin of Hordeum vulgare (Barley).